A 485-amino-acid polypeptide reads, in one-letter code: Glutamyl-tRNA(Gln) amidotransferase subunit A (485 aa).

Residues lysine 78 and serine 153 each act as charge relay system in the active site. The Acyl-ester intermediate role is filled by serine 177.

Belongs to the amidase family. GatA subfamily. In terms of assembly, heterotrimer of A, B and C subunits.

The enzyme catalyses L-glutamyl-tRNA(Gln) + L-glutamine + ATP + H2O = L-glutaminyl-tRNA(Gln) + L-glutamate + ADP + phosphate + H(+). Functionally, allows the formation of correctly charged Gln-tRNA(Gln) through the transamidation of misacylated Glu-tRNA(Gln) in organisms which lack glutaminyl-tRNA synthetase. The reaction takes place in the presence of glutamine and ATP through an activated gamma-phospho-Glu-tRNA(Gln). This chain is Glutamyl-tRNA(Gln) amidotransferase subunit A, found in Desulfatibacillum aliphaticivorans.